The sequence spans 535 residues: Bifunctional purine biosynthesis protein PurH (535 aa).

The MGS-like domain maps to 6-151 (TRLPIRRALI…KNHKDVAIVV (146 aa)).

It belongs to the PurH family.

It catalyses the reaction (6R)-10-formyltetrahydrofolate + 5-amino-1-(5-phospho-beta-D-ribosyl)imidazole-4-carboxamide = 5-formamido-1-(5-phospho-D-ribosyl)imidazole-4-carboxamide + (6S)-5,6,7,8-tetrahydrofolate. The enzyme catalyses IMP + H2O = 5-formamido-1-(5-phospho-D-ribosyl)imidazole-4-carboxamide. Its pathway is purine metabolism; IMP biosynthesis via de novo pathway; 5-formamido-1-(5-phospho-D-ribosyl)imidazole-4-carboxamide from 5-amino-1-(5-phospho-D-ribosyl)imidazole-4-carboxamide (10-formyl THF route): step 1/1. It functions in the pathway purine metabolism; IMP biosynthesis via de novo pathway; IMP from 5-formamido-1-(5-phospho-D-ribosyl)imidazole-4-carboxamide: step 1/1. This chain is Bifunctional purine biosynthesis protein PurH, found in Pseudomonas fluorescens (strain ATCC BAA-477 / NRRL B-23932 / Pf-5).